Here is a 91-residue protein sequence, read N- to C-terminus: Small ribosomal subunit protein uS19m (91 aa).

Belongs to the universal ribosomal protein uS19 family. Component of the mitochondrial small ribosomal subunit (mt-SSU). Mature N.crassa 74S mitochondrial ribosomes consist of a small (37S) and a large (54S) subunit. The 37S small subunit contains a 16S ribosomal RNA (16S mt-rRNA) and 32 different proteins. The 54S large subunit contains a 23S rRNA (23S mt-rRNA) and 42 different proteins.

The protein localises to the mitochondrion. Functionally, component of the mitochondrial ribosome (mitoribosome), a dedicated translation machinery responsible for the synthesis of mitochondrial genome-encoded proteins, including at least some of the essential transmembrane subunits of the mitochondrial respiratory chain. The mitoribosomes are attached to the mitochondrial inner membrane and translation products are cotranslationally integrated into the membrane. This chain is Small ribosomal subunit protein uS19m (rsm19), found in Neurospora crassa (strain ATCC 24698 / 74-OR23-1A / CBS 708.71 / DSM 1257 / FGSC 987).